The following is a 93-amino-acid chain: Aspartyl/glutamyl-tRNA(Asn/Gln) amidotransferase subunit C (93 aa).

This sequence belongs to the GatC family. As to quaternary structure, heterotrimer of A, B and C subunits.

The catalysed reaction is L-glutamyl-tRNA(Gln) + L-glutamine + ATP + H2O = L-glutaminyl-tRNA(Gln) + L-glutamate + ADP + phosphate + H(+). It catalyses the reaction L-aspartyl-tRNA(Asn) + L-glutamine + ATP + H2O = L-asparaginyl-tRNA(Asn) + L-glutamate + ADP + phosphate + 2 H(+). Functionally, allows the formation of correctly charged Asn-tRNA(Asn) or Gln-tRNA(Gln) through the transamidation of misacylated Asp-tRNA(Asn) or Glu-tRNA(Gln) in organisms which lack either or both of asparaginyl-tRNA or glutaminyl-tRNA synthetases. The reaction takes place in the presence of glutamine and ATP through an activated phospho-Asp-tRNA(Asn) or phospho-Glu-tRNA(Gln). The sequence is that of Aspartyl/glutamyl-tRNA(Asn/Gln) amidotransferase subunit C from Helicobacter pylori (strain HPAG1).